The sequence spans 190 residues: Nuclear transcription factor Y subunit B-2 (190 aa).

The interval 1 to 30 is disordered; the sequence is MGDSDRDSGGGQNGNNQNGQSSLSPREQDR. A DNA-binding region spans residues 32 to 38; sequence LPIANVS. Positions 59 to 70 are subunit association domain (SAD); sequence MQECVSEFISFV. The segment at 168-190 is disordered; that stretch reads HMYGATGGGSDSGGGAASGRTRT. Residues 172-184 show a composition bias toward gly residues; it reads ATGGGSDSGGGAA.

This sequence belongs to the NFYB/HAP3 subunit family. As to quaternary structure, heterotrimeric transcription factor composed of three components, NF-YA, NF-YB and NF-YC. NF-YB and NF-YC must interact and dimerize for NF-YA association and DNA binding. Binds directly with DPB3-1. In terms of tissue distribution, ubiquitous. Predominantly expressed in flowers and siliques.

It localises to the nucleus. In terms of biological role, component of the NF-Y/HAP transcription factor complex. The NF-Y complex stimulates the transcription of various genes by recognizing and binding to a CCAAT motif in promoters. The chain is Nuclear transcription factor Y subunit B-2 from Arabidopsis thaliana (Mouse-ear cress).